The primary structure comprises 195 residues: Pyridoxal 5'-phosphate synthase subunit PdxT (195 aa).

Residue 46 to 48 (GES) participates in L-glutamine binding. The active-site Nucleophile is the C78. Residues R107 and 136–137 (IR) each bind L-glutamine. Active-site charge relay system residues include H173 and E175.

It belongs to the glutaminase PdxT/SNO family. As to quaternary structure, in the presence of PdxS, forms a dodecamer of heterodimers. Only shows activity in the heterodimer.

The catalysed reaction is aldehydo-D-ribose 5-phosphate + D-glyceraldehyde 3-phosphate + L-glutamine = pyridoxal 5'-phosphate + L-glutamate + phosphate + 3 H2O + H(+). The enzyme catalyses L-glutamine + H2O = L-glutamate + NH4(+). It functions in the pathway cofactor biosynthesis; pyridoxal 5'-phosphate biosynthesis. In terms of biological role, catalyzes the hydrolysis of glutamine to glutamate and ammonia as part of the biosynthesis of pyridoxal 5'-phosphate. The resulting ammonia molecule is channeled to the active site of PdxS. This Dehalococcoides mccartyi (strain ATCC BAA-2100 / JCM 16839 / KCTC 5957 / BAV1) protein is Pyridoxal 5'-phosphate synthase subunit PdxT.